The chain runs to 118 residues: UPF0342 protein BAMEG_3696 (118 aa).

Belongs to the UPF0342 family.

In Bacillus anthracis (strain CDC 684 / NRRL 3495), this protein is UPF0342 protein BAMEG_3696.